The chain runs to 431 residues: 5-methylthioadenosine/S-adenosylhomocysteine deaminase (431 aa).

Positions 68 and 70 each coordinate Zn(2+). Substrate-binding residues include Glu97 and His186. His213 lines the Zn(2+) pocket. Substrate is bound by residues Glu216 and Asp301. Asp301 is a binding site for Zn(2+).

Belongs to the metallo-dependent hydrolases superfamily. MTA/SAH deaminase family. The cofactor is Zn(2+).

The enzyme catalyses S-adenosyl-L-homocysteine + H2O + H(+) = S-inosyl-L-homocysteine + NH4(+). The catalysed reaction is S-methyl-5'-thioadenosine + H2O + H(+) = S-methyl-5'-thioinosine + NH4(+). Catalyzes the deamination of 5-methylthioadenosine and S-adenosyl-L-homocysteine into 5-methylthioinosine and S-inosyl-L-homocysteine, respectively. Is also able to deaminate adenosine. In Halothermothrix orenii (strain H 168 / OCM 544 / DSM 9562), this protein is 5-methylthioadenosine/S-adenosylhomocysteine deaminase.